A 479-amino-acid chain; its full sequence is Aldehyde dehydrogenase family 3 member B2 (479 aa).

Active-site residues include glutamate 223 and cysteine 257. Cysteine 476 bears the Cysteine methyl ester mark. Cysteine 476 carries S-geranylgeranyl cysteine lipidation. The propeptide at 477–479 (TLL) is removed in mature form.

This sequence belongs to the aldehyde dehydrogenase family. In terms of processing, geranylgeranylation is important for localization to lipid droplets and enzyme activity. In terms of tissue distribution, expressed in testis, white adipose tissue, lung, small intestine, kidney, spleen and liver.

It is found in the lipid droplet. It carries out the reaction an aldehyde + NAD(+) + H2O = a carboxylate + NADH + 2 H(+). It catalyses the reaction a long-chain fatty aldehyde + NAD(+) + H2O = a long-chain fatty acid + NADH + 2 H(+). The catalysed reaction is a medium-chain fatty aldehyde + NAD(+) + H2O = a medium-chain fatty acid + NADH + 2 H(+). The enzyme catalyses hexadecanoate + NADH + 2 H(+) = hexadecanal + NAD(+) + H2O. It carries out the reaction octanal + NAD(+) + H2O = octanoate + NADH + 2 H(+). The protein operates within alcohol metabolism; ethanol degradation; acetate from ethanol: step 2/2. Its function is as follows. Oxidizes medium and long chain fatty aldehydes in lipid droplets into non-toxic fatty acids. In Mus musculus (Mouse), this protein is Aldehyde dehydrogenase family 3 member B2.